The following is a 492-amino-acid chain: Glycerol kinase 1 (492 aa).

ADP is bound at residue threonine 10. Threonine 10 and serine 11 together coordinate ATP. Threonine 10 serves as a coordination point for sn-glycerol 3-phosphate. Residue lysine 14 coordinates ADP. Positions 80, 81, 132, and 241 each coordinate sn-glycerol 3-phosphate. 4 residues coordinate glycerol: arginine 80, glutamate 81, tyrosine 132, and aspartate 241. ADP is bound by residues threonine 263, glycine 306, glycine 407, and asparagine 411. ATP contacts are provided by threonine 263, glycine 306, and glycine 407.

The protein belongs to the FGGY kinase family.

The catalysed reaction is glycerol + ATP = sn-glycerol 3-phosphate + ADP + H(+). The protein operates within polyol metabolism; glycerol degradation via glycerol kinase pathway; sn-glycerol 3-phosphate from glycerol: step 1/1. Inhibited by fructose 1,6-bisphosphate (FBP). In terms of biological role, key enzyme in the regulation of glycerol uptake and metabolism. Catalyzes the phosphorylation of glycerol to yield sn-glycerol 3-phosphate. This chain is Glycerol kinase 1, found in Thermotoga maritima (strain ATCC 43589 / DSM 3109 / JCM 10099 / NBRC 100826 / MSB8).